Consider the following 67-residue polypeptide: Small ribosomal subunit protein eS27 (67 aa).

Zn(2+)-binding residues include Cys-22, Cys-25, Cys-41, and Cys-44. The C4-type zinc-finger motif lies at 22–44; it reads CPDCGNEQVVFSHAAMVVRCLVC.

It belongs to the eukaryotic ribosomal protein eS27 family. As to quaternary structure, part of the 30S ribosomal subunit. It depends on Zn(2+) as a cofactor.

The protein is Small ribosomal subunit protein eS27 of Pyrobaculum islandicum (strain DSM 4184 / JCM 9189 / GEO3).